Consider the following 133-residue polypeptide: Ubiquitin-like FUBI-ribosomal protein eS30 fusion protein (133 aa).

Residues glycine 84 to methionine 110 are disordered. A compositionally biased stretch (basic residues) spans glutamate 97 to methionine 110. Lysine 125 carries the N6-succinyllysine modification.

This sequence in the N-terminal section; belongs to the ubiquitin family. The protein in the C-terminal section; belongs to the eukaryotic ribosomal protein eS30 family. Component of the 40S subunit of the ribosome. FUBI is cleaved from ribosomal protein S30 by the deubiquitinase USP36 before the assembly of ribosomal protein S30 into pre-40S ribosomal particles. FUBI removal from ribosomal protein S30 is a crucial event for the final maturation of pre-40S particles.

It is found in the nucleus. Its subcellular location is the cytoplasm. Its function is as follows. May have pro-apoptotic activity. In terms of biological role, component of the 40S subunit of the ribosome. Contributes to the assembly and function of 40S ribosomal subunits. The sequence is that of Ubiquitin-like FUBI-ribosomal protein eS30 fusion protein (Fau) from Mus musculus (Mouse).